Here is a 155-residue protein sequence, read N- to C-terminus: uncharacterized protein (155 aa).

2 disordered regions span residues 24-63 (RVGYREGPTVETKKIQPQLPDEDGNESDKEDEQPQVVVLK) and 80-155 (KAAK…DENE). Over residues 43-56 (PDEDGNESDKEDEQ) the composition is skewed to acidic residues. Residue S50 is modified to Phosphoserine. N6-acetyllysine is present on K108. Over residues 128-147 (KQSPVRKNSQKQIKNSSLLS) the composition is skewed to polar residues. Phosphoserine occurs at positions 130, 147, and 150.

This is an uncharacterized protein from Rattus norvegicus (Rat).